The sequence spans 2343 residues: Pecanex-like protein 1 (2343 aa).

The next 2 membrane-spanning stretches (helical) occupy residues 33-53 (ALHL…YMAL) and 57-77 (MIIV…LKMV). 4 disordered regions span residues 98–163 (FTDQ…GSSR), 271–290 (SHSY…SSSA), 306–691 (QQQR…TRAR), and 749–826 (TRSR…QGQQ). Positions 143–163 (SSRNSYAGLDPSNQIGSGSSR) are enriched in polar residues. Positions 272–282 (HSYRKEHRPRG) are enriched in basic residues. Low complexity predominate over residues 372-390 (SLRSLSTRSSGSTESYCSG). Polar residues predominate over residues 396 to 412 (NSTLSSYKSEQTSSTHI). 3 stretches are compositionally biased toward basic and acidic residues: residues 416–457 (LSEH…DKTA), 507–521 (RPPE…EQGE), and 530–546 (KVCK…DVRP). A compositionally biased stretch (basic residues) spans 556 to 571 (TSAHKPGRRRTGKKRA). Composition is skewed to low complexity over residues 624–637 (SDSS…SCQS), 769–780 (AATGAAQASEEA), and 809–826 (TLLI…QGQQ). A run of 13 helical transmembrane segments spans residues 978–998 (FWIL…LLAL), 1009–1029 (ILAV…LIQG), 1034–1054 (IWVF…LKSV), 1068–1088 (IIAY…WLLD), 1118–1138 (LVIV…LPQV), 1162–1182 (LLAA…LYGL), 1195–1215 (HIPV…YHLS), 1268–1288 (LVVC…TVFT), 1296–1316 (YVLY…LPQV), 1406–1426 (SFSS…FFKF), 1434–1454 (TMLL…ELLY), 1458–1478 (FVYT…HAFA), and 1493–1513 (AVVS…AIFI). The disordered stretch occupies residues 2050–2120 (EDSDTGGGTS…VQSSLVRQSP (71 aa)). 2 stretches are compositionally biased toward polar residues: residues 2060–2080 (CPAN…QGST) and 2094–2117 (PTTS…SLVR).

The protein belongs to the pecanex family. Specifically expressed in the germ line and not in the somatic cells of the testis, reaching its peak at the pachytene stage of the meiotic prophase. Detected in pachytene spermatocytes and round spermatids (at protein level).

The protein resides in the membrane. This is Pecanex-like protein 1 from Rattus norvegicus (Rat).